The primary structure comprises 202 residues: N-(5'-phosphoribosyl)anthranilate isomerase (202 aa).

It belongs to the TrpF family.

It catalyses the reaction N-(5-phospho-beta-D-ribosyl)anthranilate = 1-(2-carboxyphenylamino)-1-deoxy-D-ribulose 5-phosphate. Its pathway is amino-acid biosynthesis; L-tryptophan biosynthesis; L-tryptophan from chorismate: step 3/5. The protein is N-(5'-phosphoribosyl)anthranilate isomerase of Listeria welshimeri serovar 6b (strain ATCC 35897 / DSM 20650 / CCUG 15529 / CIP 8149 / NCTC 11857 / SLCC 5334 / V8).